Consider the following 98-residue polypeptide: Large ribosomal subunit protein uL23 (98 aa).

It belongs to the universal ribosomal protein uL23 family. In terms of assembly, part of the 50S ribosomal subunit. Contacts protein L29, and trigger factor when it is bound to the ribosome.

Functionally, one of the early assembly proteins it binds 23S rRNA. One of the proteins that surrounds the polypeptide exit tunnel on the outside of the ribosome. Forms the main docking site for trigger factor binding to the ribosome. This chain is Large ribosomal subunit protein uL23, found in Alcanivorax borkumensis (strain ATCC 700651 / DSM 11573 / NCIMB 13689 / SK2).